Consider the following 1372-residue polypeptide: Paired amphipathic helix protein Sin3-like 1 (1372 aa).

Positions 1-50 are disordered; that stretch reads MKRIRDDVYASGSQFRRPLGSSRGQLCGQSPVHGSGDTEEEEEGGSRRVS. 2 consecutive PAH domains span residues 51–121 and 136–206; these read QKLT…LPKG and KTVE…LPAS. Low complexity predominate over residues 210–222; it reads HSAAQHSRSQAQQ. Disordered stretches follow at residues 210–244 and 272–323; these read HSAAQHSRSQAQQYSDRGSDPPLLHQMQVEKERRR and REQR…SGSA. Basic and acidic residues predominate over residues 272–315; sequence REQRKRLDKENRARRGRDLDDREAGQDNLHHFPEKRKSSRRAEA. Residues 331-400 enclose the PAH 3 domain; it reads LKSMYKQAFV…DEFNQFFERC (70 aa). Disordered regions lie at residues 764-783, 791-817, and 934-1056; these read DVNHSTSPNGEAAVSSGGDT, LKSAANGDENSSSGTFKHGIGLLNKDS, and GLRS…AEGM. The span at 938-957 shows a compositional bias: basic and acidic residues; it reads DSSKGTRNSDDPEGPSRNEK. 2 stretches are compositionally biased toward acidic residues: residues 990–1013 and 1028–1042; these read AEAEVEADAEVENEDDADDVDSEN and SQDEDREEENGEHDE. The residue at position 1049 (S1049) is a Phosphoserine.

In terms of assembly, interacts (via PAH3) with ALY2. Interacts (via PAH2) with TBP1. Interacts with ALY3, GATA21, TRP2, TKI1, VAL1, SKP1B, FBX5 and PUB14.

It localises to the nucleus. In terms of biological role, acts as a transcriptional repressor. A histone deacetylase (HDAC) activity is required for transcription repression. May play a role in telomere stability. The polypeptide is Paired amphipathic helix protein Sin3-like 1 (SNL1) (Arabidopsis thaliana (Mouse-ear cress)).